Consider the following 238-residue polypeptide: Protein lifeguard 4 (238 aa).

Residues Met-1–Val-38 are Cytoplasmic-facing. Residues Tyr-39–Phe-59 form a helical membrane-spanning segment. At Gln-60 to Glu-68 the chain is on the lumenal side. A helical transmembrane segment spans residues Ser-69–Leu-89. At His-90–Asn-97 the chain is on the cytoplasmic side. Residues Leu-98–Phe-118 traverse the membrane as a helical segment. Over Tyr-119–Asp-120 the chain is Lumenal. The helical transmembrane segment at Val-121–Tyr-141 threads the bilayer. Residues Thr-142–Lys-151 lie on the Cytoplasmic side of the membrane. Residues Phe-152–Phe-172 form a helical membrane-spanning segment. The Lumenal segment spans residues Phe-173–Ser-175. Residues Glu-176–Tyr-196 form a helical membrane-spanning segment. Over Asp-197–Glu-208 the chain is Cytoplasmic. The segment at residues Glu-209–Leu-229 is an intramembrane region (helical). The Cytoplasmic portion of the chain corresponds to Lys-230–Lys-238.

The protein belongs to the BI1 family. LFG subfamily. In terms of assembly, interacts with ITPR3.

The protein resides in the golgi apparatus membrane. Functionally, anti-apoptotic protein which can inhibit apoptosis induced by intrinsic and extrinsic apoptotic stimuli. Can modulate both capacitative Ca2+ entry and inositol 1,4,5-trisphosphate (IP3)-mediated Ca2+ release. This Mus musculus (Mouse) protein is Protein lifeguard 4 (Tmbim4).